We begin with the raw amino-acid sequence, 1235 residues long: Major DNA-binding protein (1235 aa).

The tract at residues 536 to 584 (GGLDGKGDDGVPGGGAGGGGGRDVSGGPSDGLGGGRGGGGGGDSGGMMG) is disordered. Over residues 545–584 (GVPGGGAGGGGGRDVSGGPSDGLGGGRGGGGGGDSGGMMG) the composition is skewed to gly residues. Positions 846–847 (FW) match the Required for filament formation motif. A compositionally biased stretch (gly residues) spans 1214-1226 (GVGGSSGGGGGSG). The tract at residues 1214 to 1235 (GVGGSSGGGGGSGLLPAKRSRL) is disordered. The tract at residues 1232–1235 (RSRL) is required for nuclear localization.

Belongs to the herpesviridae major DNA-binding protein family. In terms of assembly, homooligomers. Forms double-helical filaments necessary for the formation of replication compartments within the host nucleus. Interacts with the origin-binding protein. Interacts with the helicase primase complex; this interaction stimulates primer synthesis activity of the helicase-primase complex. Interacts with the DNA polymerase. Interacts with the alkaline exonuclease; this interaction increases its nuclease processivity.

Its subcellular location is the host nucleus. Its function is as follows. Plays several crucial roles in viral infection. Participates in the opening of the viral DNA origin to initiate replication by interacting with the origin-binding protein. May disrupt loops, hairpins and other secondary structures present on ssDNA to reduce and eliminate pausing of viral DNA polymerase at specific sites during elongation. Promotes viral DNA recombination by performing strand-transfer, characterized by the ability to transfer a DNA strand from a linear duplex to a complementary single-stranded DNA circle. Can also catalyze the renaturation of complementary single strands. Additionally, reorganizes the host cell nucleus, leading to the formation of prereplicative sites and replication compartments. This process is driven by the protein which can form double-helical filaments in the absence of DNA. This Homo sapiens (Human) protein is Major DNA-binding protein.